Here is a 228-residue protein sequence, read N- to C-terminus: DNA mismatch repair protein MutH (228 aa).

This sequence belongs to the MutH family.

The protein resides in the cytoplasm. Its function is as follows. Sequence-specific endonuclease that cleaves unmethylated GATC sequences. It is involved in DNA mismatch repair. The chain is DNA mismatch repair protein MutH from Yersinia pseudotuberculosis serotype IB (strain PB1/+).